Reading from the N-terminus, the 161-residue chain is ATP synthase subunit b 1 (161 aa).

The helical transmembrane segment at 3 to 23 (LDATFYALVGLILFFVLIAYL) threads the bilayer.

It belongs to the ATPase B chain family. F-type ATPases have 2 components, F(1) - the catalytic core - and F(0) - the membrane proton channel. F(1) has five subunits: alpha(3), beta(3), gamma(1), delta(1), epsilon(1). F(0) has three main subunits: a(1), b(2) and c(10-14). The alpha and beta chains form an alternating ring which encloses part of the gamma chain. F(1) is attached to F(0) by a central stalk formed by the gamma and epsilon chains, while a peripheral stalk is formed by the delta and b chains.

It localises to the cell inner membrane. Its function is as follows. F(1)F(0) ATP synthase produces ATP from ADP in the presence of a proton or sodium gradient. F-type ATPases consist of two structural domains, F(1) containing the extramembraneous catalytic core and F(0) containing the membrane proton channel, linked together by a central stalk and a peripheral stalk. During catalysis, ATP synthesis in the catalytic domain of F(1) is coupled via a rotary mechanism of the central stalk subunits to proton translocation. In terms of biological role, component of the F(0) channel, it forms part of the peripheral stalk, linking F(1) to F(0). The polypeptide is ATP synthase subunit b 1 (Sinorhizobium medicae (strain WSM419) (Ensifer medicae)).